Here is a 290-residue protein sequence, read N- to C-terminus: Isopentenyl-diphosphate Delta-isomerase II (290 aa).

The region spanning 108–260 (MLHRAFTVFL…GLKLSPWFRL (153 aa)) is the Nudix hydrolase domain. Catalysis depends on residues Cys-145 and Glu-207.

Belongs to the IPP isomerase type 1 family.

It carries out the reaction isopentenyl diphosphate = dimethylallyl diphosphate. It functions in the pathway isoprenoid biosynthesis; dimethylallyl diphosphate biosynthesis; dimethylallyl diphosphate from isopentenyl diphosphate: step 1/1. The protein operates within porphyrin-containing compound metabolism; chlorophyll biosynthesis. Functionally, catalyzes the 1,3-allylic rearrangement of the homoallylic substrate isopentenyl (IPP) to its highly electrophilic allylic isomer, dimethylallyl diphosphate (DMAPP). This Clarkia xantiana (Gunsight clarkia) protein is Isopentenyl-diphosphate Delta-isomerase II (IPI2).